The following is a 276-amino-acid chain: Merozoite surface protein 2 (276 aa).

The signal sequence occupies residues Met-1–Ile-20. N-linked (GlcNAc...) asparagine glycans are attached at residues Asn-22 and Asn-36. Positions Ala-44–Ser-202 are polymorphic region. Residues Ala-44–Gly-242 are disordered. The segment covering Gly-51 to Ala-90 has biased composition (gly residues). 5 tandem repeats follow at residues Gly-53–Ala-58, Gly-59–Ala-64, Gly-65–Ala-70, Gly-71–Ala-76, and Gly-77–Ala-82. The segment at Gly-53–Ala-82 is 5 X 6 AA tandem repeats of G-G-S-G-S-A. Low complexity predominate over residues Asn-91–Asn-127. 3 stretches are compositionally biased toward polar residues: residues Lys-143 to Pro-169, Lys-176 to Asn-187, and Gln-194 to Pro-204. Asn-153 carries N-linked (GlcNAc...) asparagine glycosylation. N-linked (GlcNAc...) asparagine glycosylation is present at Asn-225. Positions Ser-229–Lys-238 are enriched in basic and acidic residues. Cys-233 and Cys-241 form a disulfide bridge. Asn-250 is a glycosylation site (N-linked (GlcNAc...) asparagine). Asn-250 carries the GPI-anchor amidated asparagine lipid modification. The propeptide at Ser-251–Ile-276 is removed in mature form.

It localises to the cell membrane. Its function is as follows. May play a role in the merozoite attachment to the erythrocyte. The protein is Merozoite surface protein 2 of Plasmodium falciparum (isolate 7G8).